A 226-amino-acid chain; its full sequence is uncharacterized protein (226 aa).

Residues 5-25 (IKTVSFAAAAILVVIICTFLI) traverse the membrane as a helical segment.

It is found in the cell membrane. This is an uncharacterized protein from Bacillus subtilis (strain 168).